The chain runs to 152 residues: Deoxyuridine 5'-triphosphate nucleotidohydrolase (152 aa).

Substrate-binding positions include 71 to 73, asparagine 84, 88 to 90, and methionine 98; these read RSG and LID.

It belongs to the dUTPase family. The cofactor is Mg(2+).

The enzyme catalyses dUTP + H2O = dUMP + diphosphate + H(+). Its pathway is pyrimidine metabolism; dUMP biosynthesis; dUMP from dCTP (dUTP route): step 2/2. In terms of biological role, this enzyme is involved in nucleotide metabolism: it produces dUMP, the immediate precursor of thymidine nucleotides and it decreases the intracellular concentration of dUTP so that uracil cannot be incorporated into DNA. In Erwinia tasmaniensis (strain DSM 17950 / CFBP 7177 / CIP 109463 / NCPPB 4357 / Et1/99), this protein is Deoxyuridine 5'-triphosphate nucleotidohydrolase.